A 507-amino-acid polypeptide reads, in one-letter code: Maturase K (507 aa).

This sequence belongs to the intron maturase 2 family. MatK subfamily.

The protein localises to the plastid. The protein resides in the chloroplast. Its function is as follows. Usually encoded in the trnK tRNA gene intron. Probably assists in splicing its own and other chloroplast group II introns. The polypeptide is Maturase K (Buxus microphylla (Littleleaf boxwood)).